A 424-amino-acid polypeptide reads, in one-letter code: Serine hydroxymethyltransferase (424 aa).

(6S)-5,6,7,8-tetrahydrofolate-binding positions include Leu118 and 122–124 (GHL). An N6-(pyridoxal phosphate)lysine modification is found at Lys227. 351-353 (SPF) contacts (6S)-5,6,7,8-tetrahydrofolate.

Belongs to the SHMT family. As to quaternary structure, homodimer. Pyridoxal 5'-phosphate is required as a cofactor.

It localises to the cytoplasm. The catalysed reaction is (6R)-5,10-methylene-5,6,7,8-tetrahydrofolate + glycine + H2O = (6S)-5,6,7,8-tetrahydrofolate + L-serine. The protein operates within one-carbon metabolism; tetrahydrofolate interconversion. Its pathway is amino-acid biosynthesis; glycine biosynthesis; glycine from L-serine: step 1/1. Functionally, catalyzes the reversible interconversion of serine and glycine with tetrahydrofolate (THF) serving as the one-carbon carrier. This reaction serves as the major source of one-carbon groups required for the biosynthesis of purines, thymidylate, methionine, and other important biomolecules. Also exhibits THF-independent aldolase activity toward beta-hydroxyamino acids, producing glycine and aldehydes, via a retro-aldol mechanism. The chain is Serine hydroxymethyltransferase from Pseudothermotoga lettingae (strain ATCC BAA-301 / DSM 14385 / NBRC 107922 / TMO) (Thermotoga lettingae).